We begin with the raw amino-acid sequence, 355 residues long: DNA polymerase IV (355 aa).

Residues 4–185 (IIHIDMDCYF…LSLGKIPGVG (182 aa)) enclose the UmuC domain. Asp8 and Asp103 together coordinate Mg(2+). Residue Glu104 is part of the active site.

This sequence belongs to the DNA polymerase type-Y family. Monomer. Mg(2+) is required as a cofactor.

The protein resides in the cytoplasm. The catalysed reaction is DNA(n) + a 2'-deoxyribonucleoside 5'-triphosphate = DNA(n+1) + diphosphate. Poorly processive, error-prone DNA polymerase involved in untargeted mutagenesis. Copies undamaged DNA at stalled replication forks, which arise in vivo from mismatched or misaligned primer ends. These misaligned primers can be extended by PolIV. Exhibits no 3'-5' exonuclease (proofreading) activity. May be involved in translesional synthesis, in conjunction with the beta clamp from PolIII. The protein is DNA polymerase IV of Shewanella amazonensis (strain ATCC BAA-1098 / SB2B).